A 382-amino-acid chain; its full sequence is V-set and immunoglobulin domain-containing protein 1 (382 aa).

The first 21 residues, 1–21, serve as a signal peptide directing secretion; the sequence is MGLTFWKVFLILNCLAGQVNG. The region spanning 22–133 is the Ig-like V-type domain; the sequence is VQVTIPDSFV…FFGKNQGTIS (112 aa). The Extracellular portion of the chain corresponds to 22 to 234; that stretch reads VQVTIPDSFV…DLTTPYPGIG (213 aa). N-linked (GlcNAc...) asparagine glycosylation is present at Asn-32. Disulfide bonds link Cys-43/Cys-116 and Cys-161/Cys-211. In terms of domain architecture, Ig-like C2-type spans 140–227; sequence PSKPFCSIQG…GNSSCEIDLT (88 aa). N-linked (GlcNAc...) asparagine glycans are attached at residues Asn-200 and Asn-219. Residues 235–255 form a helical membrane-spanning segment; that stretch reads IIVGAFVGTLIGVIIIISVVW. The Cytoplasmic segment spans residues 256–382; it reads FVRRKVKAKG…FCDEEKVIKP (127 aa). The disordered stretch occupies residues 266-382; the sequence is KERKRNSKTT…FCDEEKVIKP (117 aa). Residues 273-285 show a composition bias toward polar residues; the sequence is KTTTELEPMTKIN. Residues 286–298 show a composition bias toward basic and acidic residues; sequence QRTEGETMPREDA. Residues 327–341 show a composition bias toward pro residues; it reads EPEPALQPTVEPPSG.

The protein resides in the membrane. The polypeptide is V-set and immunoglobulin domain-containing protein 1 (VSIG1) (Bos taurus (Bovine)).